The chain runs to 295 residues: uncharacterized protein (295 aa).

Belongs to the ROK (NagC/XylR) family.

This is an uncharacterized protein from Clostridium perfringens (strain 13 / Type A).